We begin with the raw amino-acid sequence, 392 residues long: Phosphoglycerate kinase (392 aa).

Substrate contacts are provided by residues 26–28, arginine 41, 64–67, arginine 118, and arginine 151; these read DLN and HLGR. ATP-binding positions include lysine 202, glutamate 319, and 345–348; that span reads GGDT.

It belongs to the phosphoglycerate kinase family. As to quaternary structure, monomer.

It is found in the cytoplasm. The catalysed reaction is (2R)-3-phosphoglycerate + ATP = (2R)-3-phospho-glyceroyl phosphate + ADP. It functions in the pathway carbohydrate degradation; glycolysis; pyruvate from D-glyceraldehyde 3-phosphate: step 2/5. This is Phosphoglycerate kinase from Photobacterium profundum (strain SS9).